The chain runs to 462 residues: Chromosomal replication initiator protein DnaA (462 aa).

The domain I, interacts with DnaA modulators stretch occupies residues 1-84 (MAVSLWQQCI…RFDIGSRPSA (84 aa)). The domain II stretch occupies residues 84–125 (APKPIQATAAVVKPKLESSPQKSQTSFNVNAPEPAATANHRS). Residues 126-342 (NINPTYQFEN…GALNRVIANA (217 aa)) are domain III, AAA+ region. The ATP site is built by glycine 170, glycine 172, lysine 173, and threonine 174. A domain IV, binds dsDNA region spans residues 343-462 (NFTGRPITID…YANLIRTLSS (120 aa)).

This sequence belongs to the DnaA family. In terms of assembly, oligomerizes as a right-handed, spiral filament on DNA at oriC.

The protein resides in the cytoplasm. Plays an essential role in the initiation and regulation of chromosomal replication. ATP-DnaA binds to the origin of replication (oriC) to initiate formation of the DNA replication initiation complex once per cell cycle. Binds the DnaA box (a 9 base pair repeat at the origin) and separates the double-stranded (ds)DNA. Forms a right-handed helical filament on oriC DNA; dsDNA binds to the exterior of the filament while single-stranded (ss)DNA is stabiized in the filament's interior. The ATP-DnaA-oriC complex binds and stabilizes one strand of the AT-rich DNA unwinding element (DUE), permitting loading of DNA polymerase. After initiation quickly degrades to an ADP-DnaA complex that is not apt for DNA replication. Binds acidic phospholipids. This is Chromosomal replication initiator protein DnaA from Shewanella woodyi (strain ATCC 51908 / MS32).